A 137-amino-acid polypeptide reads, in one-letter code: Nucleoside diphosphate kinase (137 aa).

The ATP site is built by lysine 9, phenylalanine 57, arginine 85, threonine 91, arginine 102, and asparagine 112. The active-site Pros-phosphohistidine intermediate is the histidine 115.

The protein belongs to the NDK family. As to quaternary structure, homotetramer. It depends on Mg(2+) as a cofactor.

It is found in the cytoplasm. The catalysed reaction is a 2'-deoxyribonucleoside 5'-diphosphate + ATP = a 2'-deoxyribonucleoside 5'-triphosphate + ADP. It carries out the reaction a ribonucleoside 5'-diphosphate + ATP = a ribonucleoside 5'-triphosphate + ADP. In terms of biological role, major role in the synthesis of nucleoside triphosphates other than ATP. The ATP gamma phosphate is transferred to the NDP beta phosphate via a ping-pong mechanism, using a phosphorylated active-site intermediate. The polypeptide is Nucleoside diphosphate kinase (Leptospira borgpetersenii serovar Hardjo-bovis (strain L550)).